The chain runs to 553 residues: Cytokine-like nuclear factor N-PAC (553 aa).

Residues 8-66 (LGDLVWGKLGRYPPWPGKIVNPPKDLKKPRGKKCFFVKFFGTEDHAWIKVEQLKPYHAH) enclose the PWWP domain. Composition is skewed to basic and acidic residues over residues 92–145 (RAKG…EGKK) and 162–182 (RAQE…KDLS). The segment at 92–190 (RAKGKDQTSS…LSIPESSTVK (99 aa)) is disordered. Residue Ser130 is modified to Phosphoserine. Lys135 participates in a covalent cross-link: Glycyl lysine isopeptide (Lys-Gly) (interchain with G-Cter in SUMO2). Ser167 carries the phosphoserine modification. The a.T hook DNA-binding region spans 168–180 (PRKRGRPPKDEKD). Residues Lys176, Lys179, Lys201, and Lys211 each participate in a glycyl lysine isopeptide (Lys-Gly) (interchain with G-Cter in SUMO2) cross-link. Positions 214 to 217 (DPHF) are interaction with histone H3. The interaction with KDM1B stretch occupies residues 216-225 (HFHHFLLSQT). Residues Lys227, Lys237, Lys240, and Lys269 each participate in a glycyl lysine isopeptide (Lys-Gly) (interchain with G-Cter in SUMO2) cross-link. The interval 261–553 (GSVTPTDKKI…MSAVYRAYIH (293 aa)) is dehydrogenase domain. Residue 271–285 (GFLGLGLMGSGIVSN) coordinates NAD(+). Lys302 is covalently cross-linked (Glycyl lysine isopeptide (Lys-Gly) (interchain with G-Cter in SUMO2)). Residues Thr362 and Lys505 each coordinate NAD(+). Ser540 is subject to Phosphoserine.

It belongs to the HIBADH-related family. NP60 subfamily. In terms of assembly, homotetramere. Interacts with MAPK14. Interacts with KDM1B at nucleosomes; this interaction stimulates H3K4me1 and H3K4me2 demethylation. Binds to mononucleosomes. Interacts with GATA4; the interaction is required for a synergistic activation of GATA4 target genes transcription.

The protein localises to the nucleus. It localises to the chromosome. In terms of biological role, cytokine-like nuclear factor with chromatin gene reader activity involved in chromatin modification and regulation of gene expression. Acts as a nucleosome-destabilizing factor that is recruited to genes during transcriptional activation. Recognizes and binds histone H3 without a preference for specific epigenetic markers and also binds DNA. Interacts with KDM1B and promotes its histone demethylase activity by facilitating the capture of H3 tails, they form a multifunctional enzyme complex that modifies transcribed chromatin and facilitates Pol II transcription through nucleosomes. Stimulates the acetylation of 'Lys-56' of nucleosomal histone H3 (H3K56ac) by EP300. With GATA4, co-binds a defined set of heart development genes and coregulates their expression during cardiomyocyte differentiation. Regulates p38 MAP kinase activity by mediating stress activation of MAPK14/p38alpha and specifically regulating MAPK14 signaling. Indirectly promotes phosphorylation of MAPK14 and activation of ATF2. The phosphorylation of MAPK14 requires upstream activity of MAP2K4 and MAP2K6. This is Cytokine-like nuclear factor N-PAC (GLYR1) from Bos taurus (Bovine).